Here is a 294-residue protein sequence, read N- to C-terminus: Glyceraldehyde-3-phosphate dehydrogenase (294 aa).

3 residues coordinate NAD(+): Asp-19, Lys-63, and Thr-105. Residues 134 to 136 (SCT), Thr-165, 194 to 195 (TG), and Arg-217 contribute to the D-glyceraldehyde 3-phosphate site. Catalysis depends on Cys-135, which acts as the Nucleophile.

It belongs to the glyceraldehyde-3-phosphate dehydrogenase family. In terms of assembly, homotetramer.

The protein localises to the cytoplasm. The enzyme catalyses D-glyceraldehyde 3-phosphate + phosphate + NAD(+) = (2R)-3-phospho-glyceroyl phosphate + NADH + H(+). It functions in the pathway carbohydrate degradation; glycolysis; pyruvate from D-glyceraldehyde 3-phosphate: step 1/5. Its function is as follows. Catalyzes the oxidative phosphorylation of glyceraldehyde 3-phosphate (G3P) to 1,3-bisphosphoglycerate (BPG) using the cofactor NAD. The first reaction step involves the formation of a hemiacetal intermediate between G3P and a cysteine residue, and this hemiacetal intermediate is then oxidized to a thioester, with concomitant reduction of NAD to NADH. The reduced NADH is then exchanged with the second NAD, and the thioester is attacked by a nucleophilic inorganic phosphate to produce BPG. The polypeptide is Glyceraldehyde-3-phosphate dehydrogenase (gap) (Klebsiella aerogenes (Enterobacter aerogenes)).